The sequence spans 285 residues: MSTNDNWYIEHFQPTGSAIGYRISGKLDEVQSPFQKIEIYQTTDWGKLMIIDGAVMLTSRDNFFYHEMISHPALFTHAAPKRVVIIGGGDCGTLREVLKHPGVESATQCDIDEQVTRMSEKYFPELCDSNDDARAELLFDDGVAYMANCPAGSVDIVIVDSTDPVGPAEGLFNKSFYESCFKALKDDGILVQQSESPLALLDLIKEMRTEMGKAGFQSFKTLPFPQPCYPTGWWSVTMASKQANADFAFRQADAQAKGFDTLYYTAHLHTGVLVAPPFVAKALGE.

One can recognise a PABS domain in the interval 5 to 241 (DNWYIEHFQP…GWWSVTMASK (237 aa)). Gln-35 is an S-methyl-5'-thioadenosine binding site. Spermidine-binding residues include His-66 and Asp-90. S-methyl-5'-thioadenosine-binding positions include Asp-110 and 141-142 (DG). Asp-160 serves as the catalytic Proton acceptor. A spermidine-binding site is contributed by 160–163 (DSTD). Pro-167 is a binding site for S-methyl-5'-thioadenosine.

This sequence belongs to the spermidine/spermine synthase family. As to quaternary structure, homodimer or homotetramer.

Its subcellular location is the cytoplasm. The catalysed reaction is S-adenosyl 3-(methylsulfanyl)propylamine + putrescine = S-methyl-5'-thioadenosine + spermidine + H(+). It functions in the pathway amine and polyamine biosynthesis; spermidine biosynthesis; spermidine from putrescine: step 1/1. Functionally, catalyzes the irreversible transfer of a propylamine group from the amino donor S-adenosylmethioninamine (decarboxy-AdoMet) to putrescine (1,4-diaminobutane) to yield spermidine. In Xanthomonas campestris pv. campestris (strain 8004), this protein is Polyamine aminopropyltransferase.